A 629-amino-acid chain; its full sequence is tRNA uridine 5-carboxymethylaminomethyl modification enzyme MnmG (629 aa).

Residues 13–18 (GGGHAG), V125, and S180 contribute to the FAD site. Residue 273–287 (GPRYCPSIEDKVMRF) coordinates NAD(+). Residue Q370 participates in FAD binding.

This sequence belongs to the MnmG family. As to quaternary structure, homodimer. Heterotetramer of two MnmE and two MnmG subunits. Requires FAD as cofactor.

The protein resides in the cytoplasm. Its function is as follows. NAD-binding protein involved in the addition of a carboxymethylaminomethyl (cmnm) group at the wobble position (U34) of certain tRNAs, forming tRNA-cmnm(5)s(2)U34. This Salmonella schwarzengrund (strain CVM19633) protein is tRNA uridine 5-carboxymethylaminomethyl modification enzyme MnmG.